The following is a 233-amino-acid chain: Transcriptional regulatory protein WalR (233 aa).

Residues 4–117 enclose the Response regulatory domain; it reads KVVVVDDEKP…ELIARVKANL (114 aa). 4-aspartylphosphate is present on Asp-53. A DNA-binding region (ompR/PhoB-type) is located at residues 132 to 231; sequence TNEITIKDIV…RRGVGYFLQQ (100 aa).

Post-translationally, phosphorylated by WalK.

It localises to the cytoplasm. Its function is as follows. Member of the two-component regulatory system WalK/WalR. The sequence is that of Transcriptional regulatory protein WalR (walR) from Staphylococcus haemolyticus (strain JCSC1435).